A 427-amino-acid chain; its full sequence is Histidinol dehydrogenase (427 aa).

The NAD(+) site is built by Tyr-125, Gln-186, and Asn-209. Substrate is bound by residues Ser-234, Gln-256, and His-259. The Zn(2+) site is built by Gln-256 and His-259. Active-site proton acceptor residues include Glu-325 and His-326. Substrate-binding residues include His-326, Asp-359, Glu-413, and His-419. Zn(2+) is bound at residue Asp-359. His-419 contributes to the Zn(2+) binding site.

The protein belongs to the histidinol dehydrogenase family. The cofactor is Zn(2+).

The enzyme catalyses L-histidinol + 2 NAD(+) + H2O = L-histidine + 2 NADH + 3 H(+). It participates in amino-acid biosynthesis; L-histidine biosynthesis; L-histidine from 5-phospho-alpha-D-ribose 1-diphosphate: step 9/9. In terms of biological role, catalyzes the sequential NAD-dependent oxidations of L-histidinol to L-histidinaldehyde and then to L-histidine. In Leptospira interrogans serogroup Icterohaemorrhagiae serovar Lai (strain 56601), this protein is Histidinol dehydrogenase.